A 158-amino-acid polypeptide reads, in one-letter code: GTP-dependent dephospho-CoA kinase (158 aa).

GTP is bound by residues aspartate 35, valine 36, aspartate 54, lysine 56, glutamate 109, and aspartate 132.

The protein belongs to the GTP-dependent DPCK family.

It carries out the reaction 3'-dephospho-CoA + GTP = GDP + CoA + H(+). It participates in cofactor biosynthesis; coenzyme A biosynthesis. Its function is as follows. Catalyzes the GTP-dependent phosphorylation of the 3'-hydroxyl group of dephosphocoenzyme A to form coenzyme A (CoA). The protein is GTP-dependent dephospho-CoA kinase of Methanococcus vannielii (strain ATCC 35089 / DSM 1224 / JCM 13029 / OCM 148 / SB).